Reading from the N-terminus, the 471-residue chain is Serine hydroxymethyltransferase 4 (471 aa).

Met1 carries the N-acetylmethionine modification. Position 39 (Ser39) interacts with L-serine. Pemetrexed is bound by residues Ser39, Tyr59, and Glu61. L-serine-binding residues include Glu61 and Tyr69. Pemetrexed contacts are provided by residues 105 to 107 (SGS), His134, Ser190, and His218. Positions 218 and 244 each coordinate L-serine. An N6-(pyridoxal phosphate)lysine modification is found at Lys244. Position 290 (Gly290) interacts with pemetrexed. Lys373 contacts methotrexate. Arg389 provides a ligand contact to L-serine. Arg389 serves as a coordination point for pemetrexed.

The protein belongs to the SHMT family. Homotetramer. Interacts with UBP16. Pyridoxal 5'-phosphate serves as cofactor. Mostly expressed in flowers, less abundant in roots, inflorescence stems, and siliques, and barely detectable in leaves.

The protein resides in the cytoplasm. The catalysed reaction is (6R)-5,10-methylene-5,6,7,8-tetrahydrofolate + glycine + H2O = (6S)-5,6,7,8-tetrahydrofolate + L-serine. The protein operates within one-carbon metabolism; tetrahydrofolate interconversion. Its activity is regulated as follows. Inhibited by the antifolate drugs methotrexate and pemetrexed. Functionally, catalyzes the interconversion of serine and glycine with the conversion of tetrahydrofolate (THF) into 5,10-methylene-THF. The polypeptide is Serine hydroxymethyltransferase 4 (Arabidopsis thaliana (Mouse-ear cress)).